Reading from the N-terminus, the 129-residue chain is Small ribosomal subunit protein uS11 (129 aa).

In terms of assembly, part of the 30S ribosomal subunit. Interacts with proteins S7 and S18. Binds to IF-3. Post-translationally, may be methylated on an undetermined residue.

Located on the platform of the 30S subunit, it bridges several disparate RNA helices of the 16S rRNA. Forms part of the Shine-Dalgarno cleft in the 70S ribosome. This chain is Small ribosomal subunit protein uS11, found in Rhodopseudomonas palustris (strain ATCC BAA-98 / CGA009).